The chain runs to 549 residues: Alanine aminotransferase 2-like (549 aa).

Residue K367 is modified to N6-(pyridoxal phosphate)lysine.

Belongs to the class-I pyridoxal-phosphate-dependent aminotransferase family. Alanine aminotransferase subfamily. As to quaternary structure, homodimer. Requires pyridoxal 5'-phosphate as cofactor.

It carries out the reaction L-alanine + 2-oxoglutarate = pyruvate + L-glutamate. It participates in amino-acid degradation; L-alanine degradation via transaminase pathway; pyruvate from L-alanine: step 1/1. Catalyzes the reversible transamination between alanine and 2-oxoglutarate to form pyruvate and glutamate. The chain is Alanine aminotransferase 2-like (gpt2l) from Danio rerio (Zebrafish).